The sequence spans 756 residues: Lysyl oxidase homolog 4 (756 aa).

Positions 1-24 are cleaved as a signal peptide; it reads MAWSPPATLFLFLLLLGQPPPSRP. 4 consecutive SRCR domains span residues 32 to 133, 159 to 287, 311 to 411, and 421 to 529; these read LRLV…VICH, VRLK…VSCV, VRLR…VRCN, and VRLA…VSCM. Intrachain disulfides connect cysteine 58–cysteine 122, cysteine 71–cysteine 132, cysteine 102–cysteine 112, cysteine 191–cysteine 276, cysteine 204–cysteine 286, cysteine 251–cysteine 261, cysteine 336–cysteine 400, cysteine 349–cysteine 410, cysteine 380–cysteine 390, cysteine 450–cysteine 515, cysteine 463–cysteine 528, cysteine 497–cysteine 507, cysteine 558–cysteine 564, cysteine 610–cysteine 658, cysteine 642–cysteine 648, cysteine 670–cysteine 680, and cysteine 717–cysteine 731. Asparagine 198 is a glycosylation site (N-linked (GlcNAc...) asparagine). The interval 533–736 is lysyl-oxidase like; sequence PDLVMNAQLV…WLHNCHTGNS (204 aa). Histidine 611, histidine 613, and histidine 615 together coordinate Cu cation. A glycan (N-linked (GlcNAc...) asparagine) is linked at asparagine 629. Residues 638 to 674 constitute a cross-link (lysine tyrosylquinone (Lys-Tyr)); it reads KASFCLEDTNCPTGLQRRYACANFGEQGVTVGCWDTY. Tyrosine 674 is modified (2',4',5'-topaquinone).

Belongs to the lysyl oxidase family. Cu cation serves as cofactor. The cofactor is lysine tyrosylquinone residue. The lysine tyrosylquinone cross-link (LTQ) is generated by condensation of the epsilon-amino group of a lysine with a topaquinone produced by oxidation of tyrosine. Post-translationally, may be proteolytically cleaved by BMP1. Expressed in many tissues, the highest levels among the tissues studied being in the skeletal muscle, testis and pancreas. Expressed in cartilage.

Its subcellular location is the secreted. The protein localises to the extracellular space. The catalysed reaction is L-lysyl-[protein] + O2 + H2O = (S)-2-amino-6-oxohexanoyl-[protein] + H2O2 + NH4(+). With respect to regulation, inhibited by beta-aminopropionitrile (BAPN). In terms of biological role, catalyzes the oxidative deamination of lysine and hydroxylysine residues in collagen and elastin, resulting in the formation of covalent cross-linkages, and the stabilization of collagen and elastin fibers. The polypeptide is Lysyl oxidase homolog 4 (LOXL4) (Homo sapiens (Human)).